The sequence spans 257 residues: Triosephosphate isomerase (257 aa).

9–11 (NWK) serves as a coordination point for substrate. Catalysis depends on His97, which acts as the Electrophile. Glu169 (proton acceptor) is an active-site residue. Substrate is bound by residues Gly175, Ser214, and 235-236 (GG).

It belongs to the triosephosphate isomerase family. In terms of assembly, homodimer.

It is found in the cytoplasm. The enzyme catalyses D-glyceraldehyde 3-phosphate = dihydroxyacetone phosphate. It participates in carbohydrate biosynthesis; gluconeogenesis. It functions in the pathway carbohydrate degradation; glycolysis; D-glyceraldehyde 3-phosphate from glycerone phosphate: step 1/1. Functionally, involved in the gluconeogenesis. Catalyzes stereospecifically the conversion of dihydroxyacetone phosphate (DHAP) to D-glyceraldehyde-3-phosphate (G3P). The chain is Triosephosphate isomerase from Vibrio cholerae serotype O1 (strain ATCC 39315 / El Tor Inaba N16961).